Consider the following 331-residue polypeptide: MLIKEYRITLPFTKEEYRLGQKYMTARKTHESSNAGDNVQLLEKSSFTDKNGVKGTFTHKVFLLKKSLPRYASAILPKSALKIEEKSWNSYPNTKTIYSCPFFGEKFYLCIESIHKDGRDEEENVFGLSKDILKKRIVDHVDIARDEVEGKDVKTDEDPRMFKSKLTGRGPLTSPNWRKEVNPAMVVYKLVTVNFNYWGFQNRVENLVQTNGLREVFLKAHRSLFCWMDEWIDLSEEQIEQFEQSTYQLMMNNTIENKLNEDIKNMNISEKKGNQQNTYSKGDFKCPNVNCQHVCSECKHMLMTTTTTTTKTVTETTTTVQSPICYRNMVC.

This sequence belongs to the PtdIns transfer protein family. PI transfer class IIA subfamily.

Its function is as follows. Catalyzes the transfer of PtdIns and phosphatidylcholine between membranes. The sequence is that of Phosphatidylinositol transfer protein 4 (pitD) from Dictyostelium discoideum (Social amoeba).